Here is a 350-residue protein sequence, read N- to C-terminus: 3-isopropylmalate dehydrogenase (350 aa).

Residue 76 to 87 coordinates NAD(+); that stretch reads GPKWDNAPKRPE. Substrate contacts are provided by arginine 94, arginine 104, arginine 132, and aspartate 217. 3 residues coordinate Mg(2+): aspartate 217, aspartate 241, and aspartate 245. 275–287 is a binding site for NAD(+); it reads GSAPDIANQNIAN.

This sequence belongs to the isocitrate and isopropylmalate dehydrogenases family. LeuB type 1 subfamily. Homodimer. Requires Mg(2+) as cofactor. The cofactor is Mn(2+).

It localises to the cytoplasm. It catalyses the reaction (2R,3S)-3-isopropylmalate + NAD(+) = 4-methyl-2-oxopentanoate + CO2 + NADH. The protein operates within amino-acid biosynthesis; L-leucine biosynthesis; L-leucine from 3-methyl-2-oxobutanoate: step 3/4. In terms of biological role, catalyzes the oxidation of 3-carboxy-2-hydroxy-4-methylpentanoate (3-isopropylmalate) to 3-carboxy-4-methyl-2-oxopentanoate. The product decarboxylates to 4-methyl-2 oxopentanoate. This Listeria monocytogenes serovar 1/2a (strain ATCC BAA-679 / EGD-e) protein is 3-isopropylmalate dehydrogenase.